Consider the following 345-residue polypeptide: Probable glucan endo-1,3-beta-glucosidase BG4 (345 aa).

An N-terminal signal peptide occupies residues 1 to 22 (MLYSPKKLFLFFLSCIVLYVNS). N-linked (GlcNAc...) asparagine glycans are attached at residues Asn-23 and Asn-119. Glu-128 functions as the Proton donor in the catalytic mechanism. The active-site Nucleophile is Glu-267. Residues Asn-277 and Asn-306 are each glycosylated (N-linked (GlcNAc...) asparagine).

The protein belongs to the glycosyl hydrolase 17 family.

It is found in the secreted. It carries out the reaction Hydrolysis of (1-&gt;3)-beta-D-glucosidic linkages in (1-&gt;3)-beta-D-glucans.. May play a role in plant defense against pathogens. The chain is Probable glucan endo-1,3-beta-glucosidase BG4 from Arabidopsis thaliana (Mouse-ear cress).